The chain runs to 194 residues: MSKMNPNEKKENASKNENVNNEEATNLQEEQSNAADEAAGSDNVSGEVEALQKKYNELNDSHLRLMAEFDNYRKRTMREKADLIKTGGEGALKNLLPIIDDFERALQNVRAAEDVEAVKEGVDLIFGKFMGYLSQQGVKPIEAIGKPFDTEEFEAIATIPAPEPDMKGKVLDCVQTGYTLFDKVIRHAKVVVGE.

The segment covering 1 to 14 (MSKMNPNEKKENAS) has biased composition (basic and acidic residues). Residues 1-48 (MSKMNPNEKKENASKNENVNNEEATNLQEEQSNAADEAAGSDNVSGEV) are disordered. Residues 24-34 (ATNLQEEQSNA) are compositionally biased toward polar residues.

This sequence belongs to the GrpE family. As to quaternary structure, homodimer.

The protein localises to the cytoplasm. Participates actively in the response to hyperosmotic and heat shock by preventing the aggregation of stress-denatured proteins, in association with DnaK and GrpE. It is the nucleotide exchange factor for DnaK and may function as a thermosensor. Unfolded proteins bind initially to DnaJ; upon interaction with the DnaJ-bound protein, DnaK hydrolyzes its bound ATP, resulting in the formation of a stable complex. GrpE releases ADP from DnaK; ATP binding to DnaK triggers the release of the substrate protein, thus completing the reaction cycle. Several rounds of ATP-dependent interactions between DnaJ, DnaK and GrpE are required for fully efficient folding. The chain is Protein GrpE from Parabacteroides distasonis (strain ATCC 8503 / DSM 20701 / CIP 104284 / JCM 5825 / NCTC 11152).